The primary structure comprises 312 residues: Acetylglutamate kinase (312 aa).

Residues 77-78, Arg-99, and Asn-192 each bind substrate; that span reads GG.

Belongs to the acetylglutamate kinase family. ArgB subfamily.

Its subcellular location is the cytoplasm. The catalysed reaction is N-acetyl-L-glutamate + ATP = N-acetyl-L-glutamyl 5-phosphate + ADP. The protein operates within amino-acid biosynthesis; L-arginine biosynthesis; N(2)-acetyl-L-ornithine from L-glutamate: step 2/4. In terms of biological role, catalyzes the ATP-dependent phosphorylation of N-acetyl-L-glutamate. The sequence is that of Acetylglutamate kinase from Synechococcus sp. (strain JA-2-3B'a(2-13)) (Cyanobacteria bacterium Yellowstone B-Prime).